The primary structure comprises 315 residues: tRNA dimethylallyltransferase (315 aa).

ATP is bound at residue 11–18; the sequence is GPTASGKS. Substrate is bound at residue 13 to 18; it reads TASGKS. Interaction with substrate tRNA stretches follow at residues 36 to 39 and 160 to 164; these read DSMQ and QRLIR.

It belongs to the IPP transferase family. Monomer. Requires Mg(2+) as cofactor.

It carries out the reaction adenosine(37) in tRNA + dimethylallyl diphosphate = N(6)-dimethylallyladenosine(37) in tRNA + diphosphate. Catalyzes the transfer of a dimethylallyl group onto the adenine at position 37 in tRNAs that read codons beginning with uridine, leading to the formation of N6-(dimethylallyl)adenosine (i(6)A). The polypeptide is tRNA dimethylallyltransferase (Rickettsia bellii (strain RML369-C)).